We begin with the raw amino-acid sequence, 42 residues long: Beta-defensin 6 (42 aa).

Gln1 is modified (pyrrolidone carboxylic acid). 3 disulfide bridges follow: Cys9–Cys38, Cys16–Cys31, and Cys21–Cys39.

Belongs to the beta-defensin family. As to expression, neutrophilic granules.

It is found in the secreted. Has bactericidal activity. Active against E.coli ML35 and S.aureus 502A. The sequence is that of Beta-defensin 6 (DEFB6) from Bos taurus (Bovine).